The sequence spans 143 residues: Class I hydrophobin 20 (143 aa).

The signal sequence occupies residues 1–22 (MLSHPMKLLFFVFALSALLAAA). Cystine bridges form between Cys54–Cys123, Cys62–Cys117, Cys63–Cys102, and Cys124–Cys137.

The protein belongs to the fungal hydrophobin family. As to quaternary structure, self-assembles to form functional amyloid fibrils called rodlets. Self-assembly into fibrillar rodlets occurs spontaneously at hydrophobic:hydrophilic interfaces and the rodlets further associate laterally to form amphipathic monolayers.

The protein resides in the secreted. It is found in the cell wall. Functionally, aerial growth, conidiation, and dispersal of filamentous fungi in the environment rely upon a capability of their secreting small amphipathic proteins called hydrophobins (HPBs) with low sequence identity. Class I can self-assemble into an outermost layer of rodlet bundles on aerial cell surfaces, conferring cellular hydrophobicity that supports fungal growth, development and dispersal; whereas Class II form highly ordered films at water-air interfaces through intermolecular interactions but contribute nothing to the rodlet structure. Hydph20 is a class I hydrophobin involved in mycelial growth. The sequence is that of Class I hydrophobin 20 from Pleurotus ostreatus (strain PC15) (Oyster mushroom).